The sequence spans 149 residues: Sex-regulated protein janus-A (149 aa).

A substrate-binding site is contributed by Lys-46. The active-site Proton acceptor is His-77. 118–120 provides a ligand contact to substrate; the sequence is STG.

This sequence belongs to the janus family.

Its function is as follows. JanA and janB regulate somatic sex differentiation. The chain is Sex-regulated protein janus-A (janA) from Drosophila pseudoobscura pseudoobscura (Fruit fly).